The following is a 353-amino-acid chain: MVRILAIETSCDETAAAVVRDRAIESNVIASQVCAHQPFGGVVPEVASRAHLENINGVITAAISEAGCDWSAIDAIAVTCAPGLVGSLLIGVTAAKTLALVHQKPLLGIHHLEGHLYASYLAEPTLEPPFLCLLVSGGHTSLIGVYGCGEYQLFGQTRDDAAGEAYDKVARLMGLGYPGGPLLDRWAQQGNPEAFDLPEGNIRLPDGKVHPYDASFSGLKTAVARLVAELRQTHPELPVADLAASFQKAVAQALTKRAIAAAVDHGFKTLAIGGGVAANSGLRQHLTAAAEPLGLRLIFPPLRLCTDNAAMIGCAAADHFQRGDRSPLDLTARSRLSLLEISALYGPTPLAVS.

2 residues coordinate Fe cation: H111 and H115. Residues 134–138, D167, G180, D184, and N279 each bind substrate; that span reads LVSGG. Fe cation is bound at residue D307.

It belongs to the KAE1 / TsaD family. Fe(2+) is required as a cofactor.

The protein localises to the cytoplasm. It carries out the reaction L-threonylcarbamoyladenylate + adenosine(37) in tRNA = N(6)-L-threonylcarbamoyladenosine(37) in tRNA + AMP + H(+). Functionally, required for the formation of a threonylcarbamoyl group on adenosine at position 37 (t(6)A37) in tRNAs that read codons beginning with adenine. Is involved in the transfer of the threonylcarbamoyl moiety of threonylcarbamoyl-AMP (TC-AMP) to the N6 group of A37, together with TsaE and TsaB. TsaD likely plays a direct catalytic role in this reaction. The sequence is that of tRNA N6-adenosine threonylcarbamoyltransferase from Thermosynechococcus vestitus (strain NIES-2133 / IAM M-273 / BP-1).